The following is a 324-amino-acid chain: Endochitinase 1 (324 aa).

Positions methionine 1–alanine 22 are cleaved as a signal peptide. The 42-residue stretch at glutamate 23–glycine 64 folds into the Chitin-binding type-1 domain. 7 cysteine pairs are disulfide-bonded: cysteine 25–cysteine 40, cysteine 34–cysteine 46, cysteine 39–cysteine 53, cysteine 58–cysteine 62, cysteine 95–cysteine 158, cysteine 170–cysteine 178, and cysteine 277–cysteine 309. Glutamate 139 serves as the catalytic Proton donor. A propeptide spans glycine 318 to methionine 324 (removed in mature form).

It belongs to the glycosyl hydrolase 19 family. Chitinase class I subfamily.

It carries out the reaction Random endo-hydrolysis of N-acetyl-beta-D-glucosaminide (1-&gt;4)-beta-linkages in chitin and chitodextrins.. Defense against chitin-containing fungal pathogens. The polypeptide is Endochitinase 1 (Gossypium hirsutum (Upland cotton)).